We begin with the raw amino-acid sequence, 345 residues long: Growth hormone-inducible transmembrane protein (345 aa).

Residues 1–45 (MLAARLVCLRTLPSRVFHPAFTKASPVVKNSITKNQWLLTPSREY) constitute a mitochondrion transit peptide. Over 46–82 (ATKTRIGIRRGRTGQELKEAALEPSMEKIFKIDQMGR) the chain is Mitochondrial matrix. A helical membrane pass occupies residues 83-103 (WFVAGGAAVGLGALCYYGLGL). The Mitochondrial intermembrane portion of the chain corresponds to 104–125 (SNEIGAIEKAVIWPQYVKDRIH). A helical membrane pass occupies residues 126–146 (STYMYLAGSIGLTALSAIAIS). Residues 147–159 (RTPVLMNFMMRGS) lie on the Mitochondrial matrix side of the membrane. A helical transmembrane segment spans residues 160–180 (WVTIGVTFAAMVGAGMLVRSI). Topologically, residues 181–190 (PYDQSPGPKH) are mitochondrial intermembrane. A helical transmembrane segment spans residues 191-211 (LAWLLHSGVMGAVVAPLTILG). At 212–213 (GP) the chain is on the mitochondrial matrix side. A helical membrane pass occupies residues 214-234 (LLIRAAWYTAGIVGGLSTVAM). Over 235-244 (CAPSEKFLNM) the chain is Mitochondrial intermembrane. Residues 245–265 (GAPLGVGLGLVFVSSLGSMFL) form a helical membrane-spanning segment. The Mitochondrial matrix portion of the chain corresponds to 266–271 (PPTTVA). A helical membrane pass occupies residues 272-292 (GATLYSVAMYGGLVLFSMFLL). At 293–345 (YDTQKVIKRAEVSPMYGVQKYDPINSMLSIYMDTLNIFMRVATMLATGGNRKK) the chain is on the mitochondrial intermembrane side.

Belongs to the BI1 family. Interacts with LETM1. Interacts with AFG3L2. In terms of processing, undergoes AFG3L2-mediated proteolytic degradation, upon hyperpolarization of mitochondria.

The protein resides in the mitochondrion inner membrane. The catalysed reaction is Ca(2+)(in) + 2 H(+)(out) = Ca(2+)(out) + 2 H(+)(in). It carries out the reaction K(+)(in) + H(+)(out) = K(+)(out) + H(+)(in). Functionally, plays an important role in maintenance of mitochondrial morphology and in mediating either calcium or potassium/proton antiport. Mediates proton-dependent calcium efflux from mitochondrion. Also functions as an electroneutral mitochondrial proton/potassium exchanger. Required for the mitochondrial tubular network and cristae organization. Involved in apoptotic release of cytochrome c. Inhibits the proteolytic activity of AFG3L2, stimulating respiration and stabilizing respiratory enzymes in actively respiring mitochondria. However, when mitochondria become hyperpolarized, GHITM loses its inhibitory activity toward AFG3L2 and the now the active AFG3L2 turns first on GHITM and, if hyperpolarization persists, on other proteins of the mitochondria, leading to a broad remodeling of the mitochondrial proteome. The sequence is that of Growth hormone-inducible transmembrane protein (GHITM) from Homo sapiens (Human).